We begin with the raw amino-acid sequence, 250 residues long: Cell division protein ZapD (250 aa).

It belongs to the ZapD family. As to quaternary structure, interacts with FtsZ.

The protein resides in the cytoplasm. Functionally, cell division factor that enhances FtsZ-ring assembly. Directly interacts with FtsZ and promotes bundling of FtsZ protofilaments, with a reduction in FtsZ GTPase activity. This is Cell division protein ZapD from Pectobacterium atrosepticum (strain SCRI 1043 / ATCC BAA-672) (Erwinia carotovora subsp. atroseptica).